The following is a 184-amino-acid chain: Protein GrpE (184 aa).

Over residues Met1–Glu10 the composition is skewed to basic and acidic residues. Residues Met1 to Gln38 are disordered.

Belongs to the GrpE family. In terms of assembly, homodimer.

The protein localises to the cytoplasm. Functionally, participates actively in the response to hyperosmotic and heat shock by preventing the aggregation of stress-denatured proteins, in association with DnaK and GrpE. It is the nucleotide exchange factor for DnaK and may function as a thermosensor. Unfolded proteins bind initially to DnaJ; upon interaction with the DnaJ-bound protein, DnaK hydrolyzes its bound ATP, resulting in the formation of a stable complex. GrpE releases ADP from DnaK; ATP binding to DnaK triggers the release of the substrate protein, thus completing the reaction cycle. Several rounds of ATP-dependent interactions between DnaJ, DnaK and GrpE are required for fully efficient folding. The polypeptide is Protein GrpE (Sulfurovum sp. (strain NBC37-1)).